Here is a 210-residue protein sequence, read N- to C-terminus: Leucyl/phenylalanyl-tRNA--protein transferase (210 aa).

It belongs to the L/F-transferase family.

The protein resides in the cytoplasm. The enzyme catalyses N-terminal L-lysyl-[protein] + L-leucyl-tRNA(Leu) = N-terminal L-leucyl-L-lysyl-[protein] + tRNA(Leu) + H(+). It catalyses the reaction N-terminal L-arginyl-[protein] + L-leucyl-tRNA(Leu) = N-terminal L-leucyl-L-arginyl-[protein] + tRNA(Leu) + H(+). It carries out the reaction L-phenylalanyl-tRNA(Phe) + an N-terminal L-alpha-aminoacyl-[protein] = an N-terminal L-phenylalanyl-L-alpha-aminoacyl-[protein] + tRNA(Phe). Functions in the N-end rule pathway of protein degradation where it conjugates Leu, Phe and, less efficiently, Met from aminoacyl-tRNAs to the N-termini of proteins containing an N-terminal arginine or lysine. This is Leucyl/phenylalanyl-tRNA--protein transferase from Ruegeria sp. (strain TM1040) (Silicibacter sp.).